A 459-amino-acid chain; its full sequence is ATP synthase subunit beta (459 aa).

Gly148 to Thr155 serves as a coordination point for ATP.

The protein belongs to the ATPase alpha/beta chains family. As to quaternary structure, F-type ATPases have 2 components, CF(1) - the catalytic core - and CF(0) - the membrane proton channel. CF(1) has five subunits: alpha(3), beta(3), gamma(1), delta(1), epsilon(1). CF(0) has three main subunits: a(1), b(2) and c(9-12). The alpha and beta chains form an alternating ring which encloses part of the gamma chain. CF(1) is attached to CF(0) by a central stalk formed by the gamma and epsilon chains, while a peripheral stalk is formed by the delta and b chains.

The protein localises to the cell inner membrane. The catalysed reaction is ATP + H2O + 4 H(+)(in) = ADP + phosphate + 5 H(+)(out). Functionally, produces ATP from ADP in the presence of a proton gradient across the membrane. The catalytic sites are hosted primarily by the beta subunits. The chain is ATP synthase subunit beta from Vesicomyosocius okutanii subsp. Calyptogena okutanii (strain HA).